The primary structure comprises 142 residues: Fluoride-specific ion channel FluC 1 (142 aa).

The next 4 membrane-spanning stretches (helical) occupy residues 23–43 (VNIA…YLID), 54–74 (LPLG…GLIG), 79–99 (GWLL…FSTF), and 116–136 (LGNV…AVSL). Na(+)-binding residues include glycine 91 and threonine 94.

This sequence belongs to the fluoride channel Fluc/FEX (TC 1.A.43) family.

The protein localises to the cell membrane. It catalyses the reaction fluoride(in) = fluoride(out). With respect to regulation, na(+) is not transported, but it plays an essential structural role and its presence is essential for fluoride channel function. In terms of biological role, fluoride-specific ion channel. Important for reducing fluoride concentration in the cell, thus reducing its toxicity. In Nocardia farcinica (strain IFM 10152), this protein is Fluoride-specific ion channel FluC 1.